Consider the following 117-residue polypeptide: SGSCTLKTCWKKMPTFRDVGNRLKSYFDGAVKVTGGNSGENLIPEDETVKQPTIKDLVYSMESHDFCEPDRKSGSLGTEGRRCNSTSMDVGGCDIMCCGRGYHEVLAEKRENCRCRF.

The O-palmitoleoyl serine; by PORCN moiety is linked to residue S1. An intrachain disulfide couples C83 to C98. A glycan (N-linked (GlcNAc...) asparagine) is linked at N84.

Belongs to the Wnt family. Post-translationally, palmitoleoylation is required for efficient binding to frizzled receptors. Depalmitoleoylation leads to Wnt signaling pathway inhibition.

It is found in the secreted. It localises to the extracellular space. Its subcellular location is the extracellular matrix. Ligand for members of the frizzled family of seven transmembrane receptors. Probable developmental protein. May be a signaling molecule which affects the development of discrete regions of tissues. Is likely to signal over only few cell diameters. The chain is Protein Wnt-6 (WNT-6) from Strongylocentrotus purpuratus (Purple sea urchin).